Reading from the N-terminus, the 278-residue chain is Undecaprenyl-diphosphatase (278 aa).

8 consecutive transmembrane segments (helical) span residues 3-23, 42-62, 88-108, 112-132, 152-172, 190-210, 225-245, and 253-273; these read YILIGVILGIVQGISEWIPIS, VAYSFGLFMEIGTIAAAIIYF, FLVIVTIITGLMGVPLYLFVI, ILGLPMTVLGVVLLTDGIIIY, IIIVGIAQGLAALPGVSRSGI, LSFISLIPAALGAIGVTVLFS, GLLISIVVATFVSIFFINALL, and VVVLVIILGIIAIISGILSGI.

Belongs to the UppP family.

The protein localises to the cell membrane. The enzyme catalyses di-trans,octa-cis-undecaprenyl diphosphate + H2O = di-trans,octa-cis-undecaprenyl phosphate + phosphate + H(+). Catalyzes the dephosphorylation of undecaprenyl diphosphate (UPP). The chain is Undecaprenyl-diphosphatase from Saccharolobus islandicus (strain M.14.25 / Kamchatka #1) (Sulfolobus islandicus).